A 122-amino-acid polypeptide reads, in one-letter code: Large ribosomal subunit protein uL14c (122 aa).

The protein belongs to the universal ribosomal protein uL14 family. Part of the 50S ribosomal subunit.

It is found in the plastid. Its subcellular location is the chloroplast. Functionally, binds to 23S rRNA. The protein is Large ribosomal subunit protein uL14c of Eucalyptus globulus subsp. globulus (Tasmanian blue gum).